A 398-amino-acid chain; its full sequence is 1-deoxy-D-xylulose 5-phosphate reductoisomerase (398 aa).

NADPH is bound by residues threonine 11, glycine 12, serine 13, isoleucine 14, arginine 38, asparagine 39, and asparagine 125. Lysine 126 provides a ligand contact to 1-deoxy-D-xylulose 5-phosphate. Glutamate 127 is a binding site for NADPH. Aspartate 151 serves as a coordination point for Mn(2+). 1-deoxy-D-xylulose 5-phosphate contacts are provided by serine 152, glutamate 153, serine 179, and histidine 202. Residue glutamate 153 participates in Mn(2+) binding. Glycine 208 contributes to the NADPH binding site. 1-deoxy-D-xylulose 5-phosphate contacts are provided by serine 215, asparagine 220, lysine 221, and glutamate 224. Glutamate 224 provides a ligand contact to Mn(2+).

The protein belongs to the DXR family. Mg(2+) is required as a cofactor. It depends on Mn(2+) as a cofactor.

The enzyme catalyses 2-C-methyl-D-erythritol 4-phosphate + NADP(+) = 1-deoxy-D-xylulose 5-phosphate + NADPH + H(+). It functions in the pathway isoprenoid biosynthesis; isopentenyl diphosphate biosynthesis via DXP pathway; isopentenyl diphosphate from 1-deoxy-D-xylulose 5-phosphate: step 1/6. In terms of biological role, catalyzes the NADPH-dependent rearrangement and reduction of 1-deoxy-D-xylulose-5-phosphate (DXP) to 2-C-methyl-D-erythritol 4-phosphate (MEP). The polypeptide is 1-deoxy-D-xylulose 5-phosphate reductoisomerase (Burkholderia vietnamiensis (strain G4 / LMG 22486) (Burkholderia cepacia (strain R1808))).